A 151-amino-acid polypeptide reads, in one-letter code: MELLIDNRQDRYEITDALIELINKAVEACLIYEGWEIDYEVSLSFVDNQEIQALNHTYRGKDYATDVLSFPLIEENQGLDLEEKLLGDIVISVEKAAEQAKEYNHSFEREMGFLVVHSMFHLMGYDHDHDEATADMRKREEAVLTAINLLR.

Residues H117, H121, and H127 each coordinate Zn(2+).

This sequence belongs to the endoribonuclease YbeY family. The cofactor is Zn(2+).

It is found in the cytoplasm. Single strand-specific metallo-endoribonuclease involved in late-stage 70S ribosome quality control and in maturation of the 3' terminus of the 16S rRNA. This is Endoribonuclease YbeY from Alkaliphilus oremlandii (strain OhILAs) (Clostridium oremlandii (strain OhILAs)).